The primary structure comprises 171 residues: Sec-independent protein translocase protein TatB (171 aa).

Residues 1 to 21 form a helical membrane-spanning segment; it reads MFDIGFSELLLVFIIGLVVLG. The tract at residues 89–171 is disordered; that stretch reads AESMKRSYVA…APSPSSSDKP (83 aa). Residues 100–123 are compositionally biased toward basic and acidic residues; that stretch reads DPEKASDEAHTIHNPVVKDNETAH. The segment covering 130–139 has biased composition (polar residues); the sequence is AAQTQASSPE.

The protein belongs to the TatB family. The Tat system comprises two distinct complexes: a TatABC complex, containing multiple copies of TatA, TatB and TatC subunits, and a separate TatA complex, containing only TatA subunits. Substrates initially bind to the TatABC complex, which probably triggers association of the separate TatA complex to form the active translocon.

Its subcellular location is the cell inner membrane. In terms of biological role, part of the twin-arginine translocation (Tat) system that transports large folded proteins containing a characteristic twin-arginine motif in their signal peptide across membranes. Together with TatC, TatB is part of a receptor directly interacting with Tat signal peptides. TatB may form an oligomeric binding site that transiently accommodates folded Tat precursor proteins before their translocation. The chain is Sec-independent protein translocase protein TatB from Escherichia coli O1:K1 / APEC.